Here is a 500-residue protein sequence, read N- to C-terminus: Cytochrome P450 monooxygenase acrD (500 aa).

The helical transmembrane segment at 13–32 (PYLSGTNLVWTLLLVGYIIP) threads the bilayer. Residues Asn-210 and Asn-414 are each glycosylated (N-linked (GlcNAc...) asparagine). Cys-447 is a heme binding site.

Belongs to the cytochrome P450 family. The cofactor is heme.

The protein localises to the membrane. It participates in secondary metabolite biosynthesis. Its function is as follows. Cytochrome P450 monooxygenase; part of the cluster that mediates the biosynthesis of acurin A, a highly reduced polyketide coupled to a serine via a peptide bond. The activities of the highly reducing polyketide synthase acrA and the nonribosomal peptide synthetase acrB are collectively responsible for the synthesis of the acurin A core structure with a heptaketide backbone produced by acrA covalently fused to a L-serine by acrB. After the formation of the PK-NRP hybrid product, it is detached from acrB by reductive release to set up the formation of the lactam ring by aldol condensation. The hydrolyase acrC then catalyzes water loss to generate a double bond in the ring. This double bond is probably reduced, which is followed by three oxidations at C-22 to generate the carboxylic acid moiety, involving probably the FAD-binding monooxygenase acrE and the cytochrome P450 monooxygenases acrD and acrF. Finally, a last methylation step performed by the O-methyltransferase acrG leads to the production of acurin A. The sequence is that of Cytochrome P450 monooxygenase acrD from Aspergillus aculeatus (strain ATCC 16872 / CBS 172.66 / WB 5094).